A 128-amino-acid chain; its full sequence is Aspartate 1-decarboxylase (128 aa).

Ser-25 functions as the Schiff-base intermediate with substrate; via pyruvic acid in the catalytic mechanism. Ser-25 carries the post-translational modification Pyruvic acid (Ser). Residue Thr-57 participates in substrate binding. The active-site Proton donor is the Tyr-58. 73-75 contributes to the substrate binding site; sequence GAA.

The protein belongs to the PanD family. Heterooctamer of four alpha and four beta subunits. The cofactor is pyruvate. In terms of processing, is synthesized initially as an inactive proenzyme, which is activated by self-cleavage at a specific serine bond to produce a beta-subunit with a hydroxyl group at its C-terminus and an alpha-subunit with a pyruvoyl group at its N-terminus.

The protein localises to the cytoplasm. The enzyme catalyses L-aspartate + H(+) = beta-alanine + CO2. It functions in the pathway cofactor biosynthesis; (R)-pantothenate biosynthesis; beta-alanine from L-aspartate: step 1/1. Its function is as follows. Catalyzes the pyruvoyl-dependent decarboxylation of aspartate to produce beta-alanine. The protein is Aspartate 1-decarboxylase of Moorella thermoacetica (strain ATCC 39073 / JCM 9320).